The primary structure comprises 182 residues: Organic solute transporter subunit beta (182 aa).

The N-terminal stretch at 1–20 (MSGLLKYLFGCFILCLLLQG) is a signal peptide. Residues 21 to 64 (KTHMTSATISKPHETIDIEKQNMTGERNSTLAQQLSFPMEDPTN) lie on the Extracellular side of the membrane. N-linked (GlcNAc...) asparagine glycosylation is found at N42 and N48. The chain crosses the membrane as a helical span at residues 65 to 85 (WNYAILALAFVVLFLAFLILA). The Cytoplasmic portion of the chain corresponds to 86 to 182 (QNSRANRTRK…LYTDSKEDDV (97 aa)).

It belongs to the OST-beta family. In terms of assembly, interacts with slc51a. The Ost-alpha/Ost-beta complex is a heterodimer composed of alpha (slc51a) and beta (slc51b) subunit; may induce the transport of slc51a from the endoplasmic reticulum to the plasma membrane. In terms of tissue distribution, expressed in liver.

Its subcellular location is the cell membrane. Its function is as follows. Essential component of the Ost-alpha/Ost-beta complex, a heterodimer that acts as the intestinal basolateral transporter responsible for bile acid export from enterocytes into portal blood. Efficiently transports the major species of bile acids. May modulate slc51a glycosylation, membrane trafficking and stability activities. Able to transport taurocholate, estrone sulfate, digoxin, and prostaglandin E(2), but not p-aminohippurate or S-dinitrophenyl glutathione. This chain is Organic solute transporter subunit beta (slc51b), found in Leucoraja erinaceus (Little skate).